Here is a 200-residue protein sequence, read N- to C-terminus: 3-isopropylmalate dehydratase small subunit (200 aa).

Belongs to the LeuD family. LeuD type 1 subfamily. As to quaternary structure, heterodimer of LeuC and LeuD.

It catalyses the reaction (2R,3S)-3-isopropylmalate = (2S)-2-isopropylmalate. Its pathway is amino-acid biosynthesis; L-leucine biosynthesis; L-leucine from 3-methyl-2-oxobutanoate: step 2/4. In terms of biological role, catalyzes the isomerization between 2-isopropylmalate and 3-isopropylmalate, via the formation of 2-isopropylmaleate. The polypeptide is 3-isopropylmalate dehydratase small subunit (Histophilus somni (strain 129Pt) (Haemophilus somnus)).